We begin with the raw amino-acid sequence, 127 residues long: uncharacterized protein (127 aa).

An N-terminal signal peptide occupies residues 1 to 23 (MAGVRARAPLPLALLLSLPAAPG). The segment at 43-127 (CFEVGLRKPP…ACPPRAPLWR (85 aa)) is disordered. Residues 59 to 70 (PPSFSSGSSRPL) are compositionally biased toward low complexity.

Its subcellular location is the secreted. This is an uncharacterized protein from Homo sapiens (Human).